Consider the following 234-residue polypeptide: Serum amyloid P-component (234 aa).

The N-terminal stretch at 1–22 is a signal peptide; sequence MDKLLSLLGVSILAGLLLEAFA. A Pentraxin (PTX) domain is found at 27-226; it reads TGKVFVFPRQ…YAVIRPRCVA (200 aa). N-linked (GlcNAc...) asparagine glycosylation is present at Asn54. Cys58 and Cys117 are disulfide-bonded. Ca(2+)-binding residues include Asn81, Glu158, Gln159, Asp160, and Gln170.

It belongs to the pentraxin family. In terms of assembly, homopentamer. Pentraxin (or pentaxin) have a discoid arrangement of 5 non-covalently bound subunits. Requires Ca(2+) as cofactor.

Its subcellular location is the secreted. The polypeptide is Serum amyloid P-component (APCS) (Mesocricetus auratus (Golden hamster)).